The primary structure comprises 359 residues: MTFDAARYTAQLQDKVTRLRDLLAPFDAPEPQVFDSPLQNFRLRAEFRLWREGGERHYAMFSQDDKRTPILIEEFPIASQRINQLMPQLKAAWQASAALSHKLFQVEFLTTLAGDAMITLCYHRPLDEHWHTAANKLATDLNVSIIGRSKGKRDVIGHDYVVEKLEVGGRTFSYRQPEGAFTQPNGTVNQKMLNWAYDALGDRPDDLLELYCGNGNFTLPLATRVRKVLATEISKTSVNAALSNLDENAVGNVTLVRLSAEELTEALNEVRPFRRLHGIDLKRYEFSSVFVDPPRAGMDPDTCELTRRFDNILYISCNPETLAANIAQLHDTHRITKCAMFDQFPWTHHMESGVLLTRR.

Gln183, Tyr211, Asn216, Glu232, and Asp292 together coordinate S-adenosyl-L-methionine. Residue Cys317 is the Nucleophile of the active site. Glu351 acts as the Proton acceptor in catalysis.

Belongs to the class I-like SAM-binding methyltransferase superfamily. RNA M5U methyltransferase family. TrmA subfamily.

The enzyme catalyses uridine(54) in tRNA + S-adenosyl-L-methionine = 5-methyluridine(54) in tRNA + S-adenosyl-L-homocysteine + H(+). It catalyses the reaction uridine(341) in tmRNA + S-adenosyl-L-methionine = 5-methyluridine(341) in tmRNA + S-adenosyl-L-homocysteine + H(+). Its function is as follows. Dual-specificity methyltransferase that catalyzes the formation of 5-methyluridine at position 54 (m5U54) in all tRNAs, and that of position 341 (m5U341) in tmRNA (transfer-mRNA). The polypeptide is tRNA/tmRNA (uracil-C(5))-methyltransferase (Pseudomonas fluorescens (strain SBW25)).